The primary structure comprises 153 residues: NADH dehydrogenase [ubiquinone] 1 beta subcomplex subunit 11, mitochondrial (153 aa).

The N-terminal 29 residues, 1–29, are a transit peptide targeting the mitochondrion; it reads MAAGLFGLSARRLLAAAATRGLPAARVRW. The disordered stretch occupies residues 49–72; sequence PEPTTQWQEDLDPEDENLYEKNPD. The chain crosses the membrane as a helical span at residues 89–109; that stretch reads LVFFFGVSIILVLGSTFVAYL.

It belongs to the complex I NDUFB11 subunit family. Complex I is composed of 45 different subunits. Interacts with BCAP31.

The protein resides in the mitochondrion inner membrane. Its function is as follows. Accessory subunit of the mitochondrial membrane respiratory chain NADH dehydrogenase (Complex I), that is believed not to be involved in catalysis. Complex I functions in the transfer of electrons from NADH to the respiratory chain. The immediate electron acceptor for the enzyme is believed to be ubiquinone. The chain is NADH dehydrogenase [ubiquinone] 1 beta subcomplex subunit 11, mitochondrial (NDUFB11) from Pongo pygmaeus (Bornean orangutan).